Consider the following 41-residue polypeptide: MDNFKKYLSTAPVLLTVWLSITASGIMIINRLYPDPLIFPI.

Residues Y7–I29 form a helical membrane-spanning segment.

Belongs to the PsaJ family.

The protein localises to the plastid. It is found in the chloroplast thylakoid membrane. May help in the organization of the PsaE and PsaF subunits. This Heterosigma akashiwo (strain NIES-293 / 8280G21-1) protein is Photosystem I reaction center subunit IX.